Reading from the N-terminus, the 404-residue chain is Mitochondrial potassium channel (404 aa).

The N-terminal 30 residues, 1-30, are a transit peptide targeting the mitochondrion; that stretch reads MTGRSRVLAMRHVGGVSPVLVRRDLFLTRT. The Mitochondrial matrix segment spans residues 31–196; sequence LCSHGPSQPR…KERTRAERTK (166 aa). S65 carries the post-translational modification Phosphoserine. A coiled-coil region spans residues 111-138; sequence VREAREDLESQQTKLKEVRDRLDRISRD. A helical transmembrane segment spans residues 197–217; it reads NWSLIGSVLGALIGVAGSTYV. Topologically, residues 218 to 380 are mitochondrial intermembrane; the sequence is NRVRLQELKA…LEAQVNRNTV (163 aa). The chain crosses the membrane as a helical span at residues 381 to 401; sequence YGTLVTCATFVAVLPVLYMLF. The Mitochondrial matrix portion of the chain corresponds to 402–404; the sequence is RAS.

As to quaternary structure, the mitochondrial potassium channel (mitoK(ATP)) forms a heteromultimer.

It localises to the mitochondrion inner membrane. The catalysed reaction is K(+)(in) = K(+)(out). Its activity is regulated as follows. Channel activity inhibited by ATP via ABCB8/MITOSUR subunit. In terms of biological role, pore-forming subunit of the mitochondrial ATP-gated potassium channel (mitoK(ATP)). Together with ATP-binding subunit ABCB8/MITOSUR of the mitoK(ATP) channel, mediates ATP-dependent K(+) currents across the mitochondrial inner membrane. An increase in ATP intracellular levels closes the channel, inhibiting K(+) transport, whereas a decrease in ATP levels enhances K(+) uptake in the mitochondrial matrix. May contribute to the homeostatic control of cellular metabolism under stress conditions by regulating the mitochondrial matrix volume. This Bos taurus (Bovine) protein is Mitochondrial potassium channel.